We begin with the raw amino-acid sequence, 102 residues long: NADH-quinone oxidoreductase subunit K (102 aa).

3 helical membrane passes run 5–25 (LAHYLVLGAILFAIGIFGIFL), 31–51 (IILLMSIELVLLAVNMNFVAF), and 62–82 (VFVFFILTVAAAEAAIGLAIL).

It belongs to the complex I subunit 4L family. As to quaternary structure, NDH-1 is composed of 14 different subunits. Subunits NuoA, H, J, K, L, M, N constitute the membrane sector of the complex.

Its subcellular location is the cell inner membrane. The enzyme catalyses a quinone + NADH + 5 H(+)(in) = a quinol + NAD(+) + 4 H(+)(out). Its function is as follows. NDH-1 shuttles electrons from NADH, via FMN and iron-sulfur (Fe-S) centers, to quinones in the respiratory chain. The immediate electron acceptor for the enzyme in this species is believed to be ubiquinone. Couples the redox reaction to proton translocation (for every two electrons transferred, four hydrogen ions are translocated across the cytoplasmic membrane), and thus conserves the redox energy in a proton gradient. In Bordetella petrii (strain ATCC BAA-461 / DSM 12804 / CCUG 43448), this protein is NADH-quinone oxidoreductase subunit K.